Reading from the N-terminus, the 892-residue chain is MSQQTTIRKLAELVNTPVEKLLEQLAGAGMKFSGPDQVVTSTEKMKLLGFLRRTHGKSDVSVGTVREAPKKITLNRRRLQEVTVNAGRNKTTVNVEVRQKRTYVKTPESEYHTPTKPPIELADAERVEILRKLEESRQRNLAEQQRLAEVDRQRVEEQERKRREEEQAELERQKTESRVVEEILVKTDSNSVKPVSKPISEERTRALPRTVRPTPAARPSVSRSDDRNSNGGVRHKPRGSHVIVSDEDDSARRFVGQMHLTAAERARRGSNTRGKGGGSHRGATHRGNENSIRSSGAHGFERPTVAVVREVAVGDTITVADLAQKLALKSGDMVKALFKMGVMVTITQTIDHDTAVLVSEELGHKVTRASSSDFEDALLAHTEEVHGEPVPRPPVVTIMGHVDHGKTSLLDYIRRTKIAVGEAGGITQHIGAYHVETPRGVISFLDTPGHAAFTSMRARGAKITDIVVLVVAADDGVMPQTKEAVQHARAAGVPLIVAVSKIDKSTADPQRVKNELLTESVVAEEFGGDTQFVELSAKTGVGVDALLDAISIQAEVLELKAVIEGRATGTVIESSLDKGRGPVATVLVQQGRLKKGDYLVCGTHYGRVRALFDEVGHQPLAASPSIPVQVLGLSGVPDAGDDFVVVDDERLAKDVAQQREAKRRESRLVTSAGNRMEDILAQMGKGENQQVLNLLIKADVQGSLEALKQALVALSNDDIRINVIHVGVGGITESDANSAVTSKATVIGFNVRADASARKIIEANGVDLRYFSIIYDVIDQVKQVASGLLGVEIREEIIGVAEVRDVFRSSKFGAVAGCMIIEGVVKRSKPIRVLRDNTVVFEGELESLRRFKENVDEVRNSTECGIGVKAYNDVRVGDSIECFERIEVARTL.

Disordered regions lie at residues 144–176 and 189–298; these read QQRL…QKTE and SNSV…SGAH. Low complexity predominate over residues 207-219; it reads LPRTVRPTPAARP. A tr-type G domain is found at 391 to 560; it reads PRPPVVTIMG…SIQAEVLELK (170 aa). GTP-binding positions include 400–407, 446–450, and 500–503; these read GHVDHGKT, DTPGH, and SKID.

The protein belongs to the TRAFAC class translation factor GTPase superfamily. Classic translation factor GTPase family. IF-2 subfamily.

The protein resides in the cytoplasm. One of the essential components for the initiation of protein synthesis. Protects formylmethionyl-tRNA from spontaneous hydrolysis and promotes its binding to the 30S ribosomal subunits. Also involved in the hydrolysis of GTP during the formation of the 70S ribosomal complex. In Xylella fastidiosa (strain M12), this protein is Translation initiation factor IF-2.